The sequence spans 261 residues: Carnitinyl-CoA dehydratase (261 aa).

Glutamate 111 acts as the Nucleophile in catalysis. Catalysis depends on glutamate 131, which acts as the Proton acceptor.

This sequence belongs to the enoyl-CoA hydratase/isomerase family.

It carries out the reaction (R)-carnitinyl-CoA = crotonobetainyl-CoA + H2O. It participates in amine and polyamine metabolism; carnitine metabolism. In terms of biological role, catalyzes the reversible dehydration of L-carnitinyl-CoA to crotonobetainyl-CoA. The protein is Carnitinyl-CoA dehydratase of Shigella flexneri.